The sequence spans 95 residues: Aspartyl/glutamyl-tRNA(Asn/Gln) amidotransferase subunit C (95 aa).

It belongs to the GatC family. Heterotrimer of A, B and C subunits.

The enzyme catalyses L-glutamyl-tRNA(Gln) + L-glutamine + ATP + H2O = L-glutaminyl-tRNA(Gln) + L-glutamate + ADP + phosphate + H(+). It carries out the reaction L-aspartyl-tRNA(Asn) + L-glutamine + ATP + H2O = L-asparaginyl-tRNA(Asn) + L-glutamate + ADP + phosphate + 2 H(+). Its function is as follows. Allows the formation of correctly charged Asn-tRNA(Asn) or Gln-tRNA(Gln) through the transamidation of misacylated Asp-tRNA(Asn) or Glu-tRNA(Gln) in organisms which lack either or both of asparaginyl-tRNA or glutaminyl-tRNA synthetases. The reaction takes place in the presence of glutamine and ATP through an activated phospho-Asp-tRNA(Asn) or phospho-Glu-tRNA(Gln). The sequence is that of Aspartyl/glutamyl-tRNA(Asn/Gln) amidotransferase subunit C from Chlorobium phaeovibrioides (strain DSM 265 / 1930) (Prosthecochloris vibrioformis (strain DSM 265)).